The chain runs to 461 residues: Putative ankyrin repeat protein FPV218 (461 aa).

12 ANK repeats span residues 1 to 28 (MLSLYYAINYKNRKMVERLLREGVHPDS), 31 to 61 (KGFYRPLVKSILLRDVDLVSILLQNGANPNN), 65 to 94 (ETVSPLAIAIKVNSPTIVSLLLDYNADTSL), 96 to 116 (PLYVSFPIIKVLVYHGIDVNV), 120 to 149 (ESRSFLHYAAKNDDVDTVISLILHGANVNV), 153 to 182 (KGLSPLHHAVSKKTTLTAKILLENGARVNI), 186 to 213 (LGRLPLHLGANTYEMVKLLIDYGSPIDI), 217 to 248 (NGSTPLHYAIWKSSLDTIRLLVNVSTINALDN), 250 to 277 (CNSPLHYIILSETEILVELLLRGADITI), 281 to 312 (CGNTPLDILCKLRIKKLDNIKAIISNAFLMRE), 358 to 385 (NGPTILDVCTDKVHFLHRLVNARDNVQY), and 431 to 460 (LPYELKHYIIEYINIEFIKSLLEHTNLKNK).

The sequence is that of Putative ankyrin repeat protein FPV218 from Fowlpox virus (strain NVSL) (FPV).